A 1435-amino-acid chain; its full sequence is MARRPSKEWRERFNALSLKCKQLIHSSITNDFTTTDKAQQSTFYSSSGLMDVRKRLSISESLEVFGSLIDNWDLVQLVGTRAEPFVLNNPASYLLVNQLLALAGQAHSAASMVFLNSLMYDDALDHVNLWPYEVERPIPQITREVLSPPPFSVNSYYLQRDIDVIKAKTKAAVYIENYRAGDVFAKKRSISKGATFEERVYHGAVTMLQRMVKLRGSTIQECFVIAISSYRCSDCVRRMMASESGTGAIHEMDHICIMRSNALRWLQAAFSDFPEFPFLMTRDGVKFASNCGAVSTQVPLLFFQTLEMMVLTMDGTLSSTWEGWVCCEWYDRARVGLFSEMFDRRGVVAHLREAILRQSRLLRYQSRGLHLASVSNFPKRSVSADGLDDRIIEGLQKFNSKVCSFIQSWIFQIDLVDEPARWLAVMIKTFASALLYVMGATSLSLEQSAQGTLGIGDPISFPRQEILLEGEWIAVDWYYPDPDLADMREMGMALVDNASPEYTDWEYGFFNVQTTNSAGNVKEVIEERRKQLVAEFGDQGKLLAKVENTRILDAVQKITSTFQNPQDFCDSADNVRKAGERHQVGRRPRVIQMVGTEGQLSAFVLHNVLRPAYKATRFTTSGKNSGDIRDMNIVLEISGELGYKSSLDVKGMDSSTKPFQTNLSLSCVFHRLRGEVLGYPAFFLGSTSSSKDNYVVTRTRYRDEHGGILVEEEYKLTYPQYVLLLGAIHWTSPTRFTDGYFQEFVMTSRTVFRSGLLNTADQHTFLGVIMYALLEKRLRQRWYGKHGKEMREKIGQRREALEEYEEHVKLLGSVLGDDQVAGAFCQGIVDEEVILRITRDLCDETKFLMERLGYECEPEISEYSAEFLKQKGVLGAPELFPERLLLFSSERGDMAGSLPLDRVKIMLSMTDEKIGRARCPLPYASLMLFTSWVSGTASFSIGEEGRLLYRTGRNWKKVFASKRAASVAWKDQFTSDGVFDVRWNGFGMFYKEWASANTKTILLGCGLLWACSDALGVPFPPLVQKDEILCPGTSVYTIPSNAMTHYLLWATRRDRADAERMWRAVRDDLLRGDNDPLESYIEYVDKMFAEVGVIDIPFSALHIYGVGMGFVAGVMPVPMEVWYDFGLFGKVGGFGTWIAELVFKDIRIDREKYDLPRLSMWKNAANHSLPSEVRRASLYARDTLHEKYGMVVPSAVLVAERPGCKIDQALFEVRRVGMEDVRELEKVLDELTRLNHLERKFTKRLAMGLFIVEKLTERRTGYGPAIASNGWGHIAAPYSFQARLLECLAFPMYNGFNYEAVRERVFVDGKLPGDPKLYLKIGRQALSYSEEAYNLVSASMGLSSRQAADMRDMILEGINGLEEARFALNPRKTFLFDVSRRKGAGFFQTPHRRKTNQAYCEMMGMALLLMEPWKFSSGDWRMSFSHRLRAILGRR.

Residues 604 to 880 enclose the RdRp catalytic domain; it reads VLHNVLRPAY…KGVLGAPELF (277 aa).

The protein belongs to the reoviridae RNA-directed RNA polymerase family. As to quaternary structure, interacts with VP4.

It catalyses the reaction RNA(n) + a ribonucleoside 5'-triphosphate = RNA(n+1) + diphosphate. Functionally, RNA-directed RNA polymerase involved in transcription and genome replication. Following infection, catalyzes the synthesis of fully conservative plus strands. After core assembly, which consists in recruitment of one capped plus-strand for each genomic segments and polymerase complexes, the polymerase switches mode and catalyzes the synthesis of complementary minus-strands. The chain is RNA-directed RNA polymerase VP1 from Callospermophilus lateralis (Golden-mantled ground squirrel).